The primary structure comprises 122 residues: Large ribosomal subunit protein uL14 (122 aa).

The protein belongs to the universal ribosomal protein uL14 family. As to quaternary structure, part of the 50S ribosomal subunit. Forms a cluster with proteins L3 and L19. In the 70S ribosome, L14 and L19 interact and together make contacts with the 16S rRNA in bridges B5 and B8.

Functionally, binds to 23S rRNA. Forms part of two intersubunit bridges in the 70S ribosome. This Streptococcus suis (strain 05ZYH33) protein is Large ribosomal subunit protein uL14.